The primary structure comprises 366 residues: Pectinesterase A (366 aa).

Residues 1–24 (MLKTISGTLALSLIIAASVHQAQA) form the signal peptide. Residues T109 and Q153 each contribute to the substrate site. Residue D178 is the Proton donor of the active site. C192 and C212 form a disulfide bridge. Catalysis depends on D199, which acts as the Nucleophile. Substrate contacts are provided by R219, N226, Y230, R267, W269, and T272.

Belongs to the pectinesterase family. In terms of assembly, monomer.

It is found in the secreted. The enzyme catalyses [(1-&gt;4)-alpha-D-galacturonosyl methyl ester](n) + n H2O = [(1-&gt;4)-alpha-D-galacturonosyl](n) + n methanol + n H(+). It functions in the pathway glycan metabolism; pectin degradation; 2-dehydro-3-deoxy-D-gluconate from pectin: step 1/5. Functionally, catalyzes the first step in maceration and soft-rotting of plant tissue. The sequence is that of Pectinesterase A from Dickeya dadantii (strain 3937) (Erwinia chrysanthemi (strain 3937)).